The primary structure comprises 178 residues: Aminoglycoside 2'-N-acetyltransferase (178 aa).

The 164-residue stretch at 8–171 folds into the N-acetyltransferase domain; it reads LHTSQLTLSE…VDFTASLYCD (164 aa). Substrate contacts are provided by residues aspartate 32 and 79–80; that span reads EA. CoA-binding positions include 81-83 and 88-93; these read MVV and RRQGIG. Residues serine 114 and 148–149 contribute to the substrate site; that span reads EE.

It belongs to the AAC(2')-I acetyltransferase family. In terms of assembly, homodimer.

The catalysed reaction is gentamicin C1a + acetyl-CoA = N(2')-acetylgentamicin C1a + CoA + H(+). Catalyzes the coenzyme A-dependent acetylation of the 2' hydroxyl or amino group of a broad spectrum of aminoglycosides. It confers resistance to aminoglycosides. This Providencia stuartii protein is Aminoglycoside 2'-N-acetyltransferase (aac).